Consider the following 212-residue polypeptide: Methylthioribulose-1-phosphate dehydratase (212 aa).

Zn(2+) contacts are provided by H97 and H99.

The protein belongs to the aldolase class II family. MtnB subfamily. As to quaternary structure, homotetramer. The cofactor is Zn(2+).

It carries out the reaction 5-(methylsulfanyl)-D-ribulose 1-phosphate = 5-methylsulfanyl-2,3-dioxopentyl phosphate + H2O. The protein operates within amino-acid biosynthesis; L-methionine biosynthesis via salvage pathway; L-methionine from S-methyl-5-thio-alpha-D-ribose 1-phosphate: step 2/6. Its function is as follows. Catalyzes the dehydration of methylthioribulose-1-phosphate (MTRu-1-P) into 2,3-diketo-5-methylthiopentyl-1-phosphate (DK-MTP-1-P). The sequence is that of Methylthioribulose-1-phosphate dehydratase from Bacillus cereus (strain B4264).